Here is a 304-residue protein sequence, read N- to C-terminus: Glycine--tRNA ligase alpha subunit (304 aa).

The protein belongs to the class-II aminoacyl-tRNA synthetase family. In terms of assembly, tetramer of two alpha and two beta subunits.

The protein resides in the cytoplasm. The catalysed reaction is tRNA(Gly) + glycine + ATP = glycyl-tRNA(Gly) + AMP + diphosphate. This is Glycine--tRNA ligase alpha subunit from Yersinia pseudotuberculosis serotype O:1b (strain IP 31758).